Reading from the N-terminus, the 507-residue chain is Myocyte-specific enhancer factor 2D (507 aa).

The 55-residue stretch at 3 to 57 folds into the MADS-box domain; the sequence is RKKIQIQRITDERNRQVTFTKRKFGLMKKAYELSVLCDCEIALIIFNHSNKLFQY. The segment at residues 58–86 is a DNA-binding region (mef2-type); that stretch reads ASTDMDKVLLKYTEYNEPHESRTNADIIE. S98, S106, S110, S121, and S180 each carry phosphoserine. The segment at 174 to 207 is disordered; sequence TDPRLLSPQQPALQRNSVSPGLPQRPASAGAMLG. Polar residues predominate over residues 180–192; sequence SPQQPALQRNSVS. The residue at position 190 (S190) is a Phosphoserine; by PKA. S231 carries the phosphoserine modification. Disordered regions lie at residues 244–267, 357–392, and 423–507; these read NKVI…PSRK, WQQP…QQPH, and SIKS…WTLK. K245 carries the N6-acetyllysine modification. S251 is modified (phosphoserine). Positions 363 to 389 are enriched in pro residues; the sequence is PQQPQPPQPPQSQPQPPQPQPQQPPQQ. N6-acetyllysine; alternate is present on K425. A Glycyl lysine isopeptide (Lys-Gly) (interchain with G-Cter in SUMO); alternate cross-link involves residue K425. The residue at position 430 (S430) is a Phosphoserine.

Forms a complex with class II HDACs in undifferentiating cells. On myogenic differentiation, HDACs are released into the cytoplasm allowing MEF2s to interact with other proteins for activation. Interacts with HDAC4 (in undifferentiating cells); the interaction translocates MEF2D to nuclear dots. Forms a heterodimer with MEF2A. Interacts with MAPK7; the interaction phosphorylates but does not activate MEF2D. Interacts with MYOG. Interacts with CCAR2 and HDAC3. In terms of processing, phosphorylated on Ser-430 by CDK5 is required for Lys-425 sumoylation and inhibits transcriptional activity. In neurons, enhanced CDK5 activity induced by neurotoxins promotes caspase 3-mediated cleavage leading to neuron apoptosis. Phosphorylation on Ser-180 can be enhanced by EGF. Phosphorylated and activated by CaMK4. Acetylated on Lys-425 by CREBBP. Acetylated by EP300. Deacetylated by SIRT1 and HDAC3. Post-translationally, sumoylated on Lys-425 with SUMO2 but not SUMO1; which inhibits transcriptional activity and myogenic activity. Desumoylated by SENP3.

The protein localises to the nucleus. Functionally, transcriptional activator which binds specifically to the MEF2 element, 5'-YTA[AT](4)TAR-3', found in numerous muscle-specific, growth factor- and stress-induced genes. Mediates cellular functions not only in skeletal and cardiac muscle development, but also in neuronal differentiation and survival. Plays diverse roles in the control of cell growth, survival and apoptosis via p38 MAPK signaling in muscle-specific and/or growth factor-related transcription. Plays a critical role in the regulation of neuronal apoptosis. The polypeptide is Myocyte-specific enhancer factor 2D (Mef2d) (Rattus norvegicus (Rat)).